The chain runs to 430 residues: Transcription factor PIF4 (430 aa).

5 disordered regions span residues 42 to 71 (QTHREQTQTQKQDHHEEALRSSTFLEDQET), 97 to 136 (MDPLQRPTSETVKPKSSPEPPQVMVKPKACPDPPPQVMPP), 160 to 183 (TVGPSHCGSNPSQNDLDVSMSHDR), 223 to 266 (DRKR…NLSE), and 405 to 430 (SSPAGQQSQQPSSVPTKTTDGSRLDH). Positions 43-60 (THREQTQTQKQDHHEEAL) are enriched in basic and acidic residues. The span at 61-71 (RSSTFLEDQET) shows a compositional bias: polar residues. Over residues 126 to 136 (CPDPPPQVMPP) the composition is skewed to pro residues. The segment covering 160-175 (TVGPSHCGSNPSQNDL) has biased composition (polar residues). Residues 244 to 253 (NKSNQRSGSN) are compositionally biased toward low complexity. Over residues 257–266 (RAAEVHNLSE) the composition is skewed to basic and acidic residues. Positions 257–306 (RAAEVHNLSERRRRDRINERMKALQELIPHCSKTDKASILDEAIDYLKSL) constitute a bHLH domain. The segment covering 405–419 (SSPAGQQSQQPSSVP) has biased composition (low complexity).

Belongs to the bHLH protein family. As to quaternary structure, interacts preferentially with the Pfr form of phytochrome B (phyB). Binds DNA as a homodimer, but once bound to DNA, loses its capacity to interact with phyB. Interacts with APRR1/TOC1 and PIF3. Binds to RGL2 and RGA. Forms non-functional heterodimer with HFR1. Interacts with PHYB, CRY1 and CRY2 in the nucleus in response to low blue light (LBL). Interacts with FYPP1 and FYPP3. Associates to PTAC12/HMR/PAP5, which acts as a transcriptional coactivator to trigger the thermoresponsive growth-relevant genes and promote warm-temperature-dependent PIF4 accumulation. Interacts with MED14. As to expression, mainly expressed in leaves, stems and seedlings, and, to a lower extent, in fruits, flowers and roots.

The protein resides in the nucleus. Transcription factor acting negatively in the phytochrome B signaling pathway. May regulate the expression of a subset of genes involved in cell expansion by binding to the G-box motif. Activated by CRY1 and CRY2 in response to low blue light (LBL) by direct binding at chromatin on E-box variant 5'-CA[CT]GTG-3' to stimulate specific gene expression to adapt global physiology (e.g. hypocotyl elongation in low blue light). Element of a PIF4/HMR/MED14-dependent thermoresponsive process; collaboratively with its transcriptional coactivator PTAC12/HMR/PAP5, involved in the regulation of thermoresponsive growth-relevant genes (e.g. mainly involved in biosynthesis and signaling of the phytohormone auxin) leading to daytime warm temperature elicitation of MED14-dependent thermomorphogenesis (e.g. hypocotyl elongation). In Arabidopsis thaliana (Mouse-ear cress), this protein is Transcription factor PIF4.